The following is a 691-amino-acid chain: Alpha-1,4-glucan:maltose-1-phosphate maltosyltransferase (691 aa).

Alpha-maltose 1-phosphate-binding residues include Lys280, Gln341, and Asp376. The active-site Nucleophile is the Asp411. Asn412 is an alpha-maltose 1-phosphate binding site. The active-site Proton donor is Glu440. Lys550 to Tyr551 is a binding site for alpha-maltose 1-phosphate.

Belongs to the glycosyl hydrolase 13 family. GlgE subfamily. Homodimer.

The enzyme catalyses alpha-maltose 1-phosphate + [(1-&gt;4)-alpha-D-glucosyl](n) = [(1-&gt;4)-alpha-D-glucosyl](n+2) + phosphate. Functionally, maltosyltransferase that uses maltose 1-phosphate (M1P) as the sugar donor to elongate linear or branched alpha-(1-&gt;4)-glucans. Is involved in a branched alpha-glucan biosynthetic pathway from trehalose, together with TreS, Mak and GlgB. The sequence is that of Alpha-1,4-glucan:maltose-1-phosphate maltosyltransferase from Arcanobacterium haemolyticum (strain ATCC 9345 / DSM 20595 / CCM 5947 / CCUG 17215 / LMG 16163 / NBRC 15585 / NCTC 8452 / 11018).